The following is a 430-amino-acid chain: Probable beta-1,3-galactosyl-O-glycosyl-glycoprotein beta-1,6-N-acetylglucosaminyltransferase 7 (430 aa).

Topologically, residues 1 to 8 are cytoplasmic; the sequence is MSQLRATK. A helical; Signal-anchor for type II membrane protein membrane pass occupies residues 9-25; it reads SGLVVRAVICIFIFLYL. Residues 26 to 430 lie on the Extracellular side of the membrane; the sequence is RNPTPAESEE…QSHFNMRLNR (405 aa). 4 cysteine pairs are disulfide-bonded: Cys53/Cys205, Cys139/Cys354, Cys160/Cys187, and Cys363/Cys395. Asn87 carries an N-linked (GlcNAc...) asparagine glycan. Residue Asn272 is glycosylated (N-linked (GlcNAc...) asparagine).

The protein belongs to the glycosyltransferase 14 family.

It is found in the golgi apparatus membrane. The protein operates within protein modification; protein glycosylation. Functionally, probable glycosyltransferase. This is Probable beta-1,3-galactosyl-O-glycosyl-glycoprotein beta-1,6-N-acetylglucosaminyltransferase 7 from Homo sapiens (Human).